The chain runs to 431 residues: Adenylosuccinate synthetase (431 aa).

Residues 13–19 (GDEGKGK) and 41–43 (GHT) each bind GTP. D14 serves as the catalytic Proton acceptor. The Mg(2+) site is built by D14 and G41. Residues 14–17 (DEGK), 39–42 (NAGH), T130, R144, Q225, T240, and R304 each bind IMP. Residue H42 is the Proton donor of the active site. 300 to 306 (ATTGRKR) is a substrate binding site. GTP is bound by residues R306, 332–334 (KLD), and 415–417 (STG).

The protein belongs to the adenylosuccinate synthetase family. Homodimer. The cofactor is Mg(2+).

It localises to the cytoplasm. The enzyme catalyses IMP + L-aspartate + GTP = N(6)-(1,2-dicarboxyethyl)-AMP + GDP + phosphate + 2 H(+). The protein operates within purine metabolism; AMP biosynthesis via de novo pathway; AMP from IMP: step 1/2. Functionally, plays an important role in the de novo pathway of purine nucleotide biosynthesis. Catalyzes the first committed step in the biosynthesis of AMP from IMP. The polypeptide is Adenylosuccinate synthetase (Shewanella woodyi (strain ATCC 51908 / MS32)).